The following is a 209-amino-acid chain: Zinc finger SWIM domain-containing protein sws1 (209 aa).

Positions 1–30 (MQQGHFTSNSYHSKTLNSSSLPVSSKFSHT) are enriched in polar residues. The disordered stretch occupies residues 1-33 (MQQGHFTSNSYHSKTLNSSSLPVSSKFSHTNDP). The SWIM-type zinc finger occupies 143–203 (TTIDLKYWYC…HILAASILRA (61 aa)).

In terms of assembly, interacts with rdl1, rlp1 and srs2.

It localises to the cytoplasm. Its subcellular location is the nucleus. It is found in the nucleoplasm. Involved in early stages of the homologous recombination repair (HRR) pathway of double-stranded DNA breaks arising during DNA replication or induced by DNA-damaging agents. This is Zinc finger SWIM domain-containing protein sws1 (sws1) from Schizosaccharomyces pombe (strain 972 / ATCC 24843) (Fission yeast).